The sequence spans 338 residues: Heat-inducible transcription repressor HrcA (338 aa).

Belongs to the HrcA family.

In terms of biological role, negative regulator of class I heat shock genes (grpE-dnaK-dnaJ and groELS operons). Prevents heat-shock induction of these operons. This is Heat-inducible transcription repressor HrcA from Thermotoga petrophila (strain ATCC BAA-488 / DSM 13995 / JCM 10881 / RKU-1).